Here is a 381-residue protein sequence, read N- to C-terminus: Neuropeptide Y receptor type 2 (381 aa).

The interval 1-35 is disordered; sequence MGPIGAEADENQTVEEMKVEQYGPQTTPRGELVPD. The Extracellular segment spans residues 1-51; it reads MGPIGAEADENQTVEEMKVEQYGPQTTPRGELVPDPEPELIDSTKLIEVQV. Residue Asn11 is glycosylated (N-linked (GlcNAc...) asparagine). A helical transmembrane segment spans residues 52–72; that stretch reads VLILAYCSIILLGVIGNSLVI. Over 73–86 the chain is Cytoplasmic; the sequence is HVVIKFKSMRTVTN. Residues 87-107 form a helical membrane-spanning segment; sequence FFIANLAVADLLVNTLCLPFT. The Extracellular portion of the chain corresponds to 108–124; the sequence is LTYTLMGEWKMGPVLCH. Cys123 and Cys203 are disulfide-bonded. The chain crosses the membrane as a helical span at residues 125-145; it reads LVPYAQGLAVQVSTITLTVIA. At 146–165 the chain is on the cytoplasmic side; that stretch reads LDRHRCIVYHLESKISKRIS. Residues 166–186 traverse the membrane as a helical segment; sequence FLIIGLAWGISALLASPLAIF. Residues 187–216 lie on the Extracellular side of the membrane; sequence REYSLIEIIPDFEIVACTEKWPGEEKSIYG. Residues 217–237 form a helical membrane-spanning segment; that stretch reads TVYSLSSLLILYVLPLGIISF. Residues 238–268 are Cytoplasmic-facing; the sequence is SYTRIWSKLKNHVSPGAANDHYHQRRQKTTK. The chain crosses the membrane as a helical span at residues 269–289; sequence MLVCVVVVFAVSWLPLHAFQL. Over 290 to 304 the chain is Extracellular; the sequence is AVDIDSQVLDLKEYK. Residues 305-325 form a helical membrane-spanning segment; it reads LIFTVFHIIAMCSTFANPLLY. At 326–381 the chain is on the cytoplasmic side; it reads GWMNSNYRKAFLSAFRCEQRLDAIHSEVSVTFKAKKNLEVRKNSGPNDSFTEATNV. Cys342 carries the S-palmitoyl cysteine lipid modification.

This sequence belongs to the G-protein coupled receptor 1 family. High levels in amygdala, corpus callosum, hippocampus and subthalamic nucleus. Also detectable in caudate nucleus, hypothalamus and substantia nigra.

Its subcellular location is the cell membrane. Its function is as follows. Receptor for neuropeptide Y and peptide YY. The rank order of affinity of this receptor for pancreatic polypeptides is PYY &gt; NPY &gt; PYY (3-36) &gt; NPY (2-36) &gt; [Ile-31, Gln-34] PP &gt; [Leu-31, Pro-34] NPY &gt; PP, [Pro-34] PYY and NPY free acid. This Homo sapiens (Human) protein is Neuropeptide Y receptor type 2 (NPY2R).